A 500-amino-acid chain; its full sequence is Probable cytosol aminopeptidase (500 aa).

Residues Lys-264 and Asp-269 each contribute to the Mn(2+) site. The active site involves Lys-276. Asp-287, Asp-346, and Glu-348 together coordinate Mn(2+). Residue Arg-350 is part of the active site.

Belongs to the peptidase M17 family. The cofactor is Mn(2+).

It localises to the cytoplasm. The catalysed reaction is Release of an N-terminal amino acid, Xaa-|-Yaa-, in which Xaa is preferably Leu, but may be other amino acids including Pro although not Arg or Lys, and Yaa may be Pro. Amino acid amides and methyl esters are also readily hydrolyzed, but rates on arylamides are exceedingly low.. It catalyses the reaction Release of an N-terminal amino acid, preferentially leucine, but not glutamic or aspartic acids.. Functionally, presumably involved in the processing and regular turnover of intracellular proteins. Catalyzes the removal of unsubstituted N-terminal amino acids from various peptides. The sequence is that of Probable cytosol aminopeptidase from Rhodopseudomonas palustris (strain TIE-1).